We begin with the raw amino-acid sequence, 395 residues long: Ribose-phosphate pyrophosphokinase 2, chloroplastic (395 aa).

The span at 1–23 (MASPAPRSLSSSSSSSSSSFCPS) shows a compositional bias: low complexity. The disordered stretch occupies residues 1 to 33 (MASPAPRSLSSSSSSSSSSFCPSISPPPRSPSR). The transit peptide at 1–42 (MASPAPRSLSSSSSSSSSSFCPSISPPPRSPSRASLPFSVKC) directs the protein to the chloroplast. Mg(2+) contacts are provided by Asp209, His211, Asp220, and Asp224. The tract at residues 295 to 310 (GKVAVMLDDMIDTAGT) is binding of phosphoribosylpyrophosphate.

The protein belongs to the ribose-phosphate pyrophosphokinase family.

The protein resides in the plastid. Its subcellular location is the chloroplast. The catalysed reaction is D-ribose 5-phosphate + ATP = 5-phospho-alpha-D-ribose 1-diphosphate + AMP + H(+). In Spinacia oleracea (Spinach), this protein is Ribose-phosphate pyrophosphokinase 2, chloroplastic (PRS2).